A 366-amino-acid chain; its full sequence is Peptide chain release factor 2 (366 aa).

Gln251 carries the post-translational modification N5-methylglutamine.

The protein belongs to the prokaryotic/mitochondrial release factor family. In terms of processing, methylated by PrmC. Methylation increases the termination efficiency of RF2.

Its subcellular location is the cytoplasm. Its function is as follows. Peptide chain release factor 2 directs the termination of translation in response to the peptide chain termination codons UGA and UAA. This Bacillus subtilis (strain 168) protein is Peptide chain release factor 2 (prfB).